We begin with the raw amino-acid sequence, 146 residues long: D-aminoacyl-tRNA deacylase (146 aa).

Positions 137-138 match the Gly-cisPro motif, important for rejection of L-amino acids motif; sequence GP.

This sequence belongs to the DTD family. As to quaternary structure, homodimer.

It localises to the cytoplasm. It carries out the reaction glycyl-tRNA(Ala) + H2O = tRNA(Ala) + glycine + H(+). The enzyme catalyses a D-aminoacyl-tRNA + H2O = a tRNA + a D-alpha-amino acid + H(+). In terms of biological role, an aminoacyl-tRNA editing enzyme that deacylates mischarged D-aminoacyl-tRNAs. Also deacylates mischarged glycyl-tRNA(Ala), protecting cells against glycine mischarging by AlaRS. Acts via tRNA-based rather than protein-based catalysis; rejects L-amino acids rather than detecting D-amino acids in the active site. By recycling D-aminoacyl-tRNA to D-amino acids and free tRNA molecules, this enzyme counteracts the toxicity associated with the formation of D-aminoacyl-tRNA entities in vivo and helps enforce protein L-homochirality. In Psychrobacter sp. (strain PRwf-1), this protein is D-aminoacyl-tRNA deacylase.